Here is an 825-residue protein sequence, read N- to C-terminus: Probable inorganic carbon transporter subunit DabA (825 aa).

Zn(2+)-binding residues include Cys-334, Asp-336, His-521, and Cys-536.

Belongs to the inorganic carbon transporter (TC 9.A.2) DabA family. As to quaternary structure, forms a complex with DabB. It depends on Zn(2+) as a cofactor.

The protein localises to the cell inner membrane. In terms of biological role, part of an energy-coupled inorganic carbon pump. This Acidithiobacillus ferrooxidans (strain ATCC 53993 / BNL-5-31) (Leptospirillum ferrooxidans (ATCC 53993)) protein is Probable inorganic carbon transporter subunit DabA.